The following is a 233-amino-acid chain: Bcl-2-like protein 1 (233 aa).

Residues 4–24 (SNRELVVDFLSYKLSQKGYSW) carry the BH4 motif. The interval 29–71 (DVEENRTEAPEGTESEAETPSAINGNPSWHLADSPAVNGATGH) is disordered. S49 carries the phosphoserine; by PLK3 modification. At S62 the chain carries Phosphoserine; by CDK1. Residues 86-100 (VKQALREAGDEFELR) carry the BH3 motif. Positions 129-148 (ELFRDGVNWGRIVAFFSFGG) match the BH1 motif. The BH2 signature appears at 180–195 (PWIQENGGWDTFVELY). A helical transmembrane segment spans residues 210–226 (FNRWFLTGMTLAGVVLL).

This sequence belongs to the Bcl-2 family. As to quaternary structure, homodimer. Heterodimers with BAX, BAK or BCL2. Heterodimerization with BAX does not seem to be required for anti-apoptotic activity. Interacts with BCL2L11. Interacts with BAD. Interacts with SIVA1 isoform 1; the interaction inhibits the anti-apoptotic activity. Interacts with BECN1 and PGAM5. Interacts with IKZF3. Interacts with HEBP2. Interacts with BOP. Interacts with p53/TP53 and BBC3; interaction with BBC3 disrupts the interaction with p53/TP53. Interacts with DNM1L and CLTA; DNM1L and BCL2L1 may form a complex in synaptic vesicles that also contains clathrin and MFF. Interacts with ATP5F1A and ATP5F1B; the interactions mediate the association of BCL2L1 with the mitochondrial membrane ATP synthase F(1)F(0) ATP synthase. Interacts with VDAC1. Interacts (via the loop between motifs BH4 and BH3) with NLRP1 (via LRR repeats), but not with NLRP2, NLRP3, NLRP4, PYCARD, nor MEFV. Interacts with BCL2L11 (via BH3). Interacts with RNF183. Interacts with GIMAP3/IAN4. Interacts with GIMAP5 and HSPA8/HSC70; the interaction between HSPA8 and BCL2L1 is impaired in the absence of GIMAP5. Interacts with CLU (isoform 4); this interaction releases and activates BAX and promotes cell death. Post-translationally, proteolytically cleaved by caspases during apoptosis. The cleaved protein, lacking the BH4 motif, has pro-apoptotic activity. Phosphorylated on Ser-62 by CDK1. This phosphorylation is partial in normal mitotic cells, but complete in G2-arrested cells upon DNA-damage, thus promoting subsequent apoptosis probably by triggering caspases-mediated proteolysis. Phosphorylated by PLK3, leading to regulate the G2 checkpoint and progression to cytokinesis during mitosis. Phosphorylation at Ser-49 appears during the S phase and G2, disappears rapidly in early mitosis during prometaphase, metaphase and early anaphase, and re-appears during telophase and cytokinesis. In terms of processing, ubiquitinated by RNF183 during prolonged ER stress, leading to degradation by the proteosome.

The protein localises to the mitochondrion membrane. Its subcellular location is the nucleus membrane. It localises to the mitochondrion matrix. It is found in the cytoplasm. The protein resides in the cytoskeleton. The protein localises to the microtubule organizing center. Its subcellular location is the centrosome. It localises to the cytosol. It is found in the cytoplasmic vesicle. The protein resides in the secretory vesicle. The protein localises to the synaptic vesicle membrane. Its function is as follows. Potent inhibitor of cell death. Inhibits activation of caspases. Appears to regulate cell death by blocking the voltage-dependent anion channel (VDAC) by binding to it and preventing the release of the caspase activator, CYC1, from the mitochondrial membrane. Also acts as a regulator of G2 checkpoint and progression to cytokinesis during mitosis. Regulates presynaptic plasticity, including neurotransmitter release and recovery, number of axonal mitochondria as well as size and number of synaptic vesicle clusters. During synaptic stimulation, increases ATP availability from mitochondria through regulation of mitochondrial membrane ATP synthase F(1)F(0) activity and regulates endocytic vesicle retrieval in hippocampal neurons through association with DMN1L and stimulation of its GTPase activity in synaptic vesicles. May attenuate inflammation impairing NLRP1-inflammasome activation, hence CASP1 activation and IL1B release. In Sus scrofa (Pig), this protein is Bcl-2-like protein 1 (BCL2L1).